The primary structure comprises 525 residues: Keratin, type I cytoskeletal 24 (525 aa).

The segment at 1–30 is disordered; that stretch reads MSCSSRASSSRAGGSSSARVSAGGSSFSSG. Residues 1–139 form a head region; sequence MSCSSRASSS…VGDGGLFSGG (139 aa). The coil 1A stretch occupies residues 140–175; that stretch reads EKQTMQNLNDRLANYLDKVRALEEANTDLENKIKEW. An IF rod domain is found at 140 to 456; that stretch reads EKQTMQNLND…RLLDGEGGGS (317 aa). Residues 176–198 form a linker 1 region; that stretch reads YDKYGPGSGDGGSGRDYSKYYSI. A coil 1B region spans residues 199 to 290; that stretch reads IEDLRNQIIA…KNHEEEMKNM (92 aa). Positions 291–313 are linker 12; it reads QGSSGGEVTVEMNAAPGTDLTKL. The tract at residues 314–452 is coil 2; the sequence is LNDMRAQYEE…ETYRRLLDGE (139 aa). Residues 453-525 form a tail region; that stretch reads GGGSSFAEFG…VSSISEVKVK (73 aa). A disordered region spans residues 459-497; it reads AEFGGRNSGSVNMGSRDLVSGDSRSGSCSGQGRDSSKTR. Residues 480 to 491 are compositionally biased toward polar residues; it reads DSRSGSCSGQGR.

The protein belongs to the intermediate filament family. In terms of assembly, heterotetramer of two type I and two type II keratins. As to expression, highly expressed in keratinocytes, placenta, colon and spleen. Expressed at lower level in thymus and testis.

In Homo sapiens (Human), this protein is Keratin, type I cytoskeletal 24 (KRT24).